Reading from the N-terminus, the 524-residue chain is MDSDLISSRCVWATWNVYNGRSLSGTPLAERDGKVARKMSENGTCNRILTLESMNPCIQKVEYAVRGPIVIRAVELEKELQQGVKKPFTEVIKANIGDAHAMGQKPITFLRQVSAICLYPELMNDNKFPEDVKQKAARILQACGGHSIGAYSASQGIEVIRQDVAKYIERRDGGIQSDPNNIYLSTGASDSIVTMLKLLVSGQGKSRTGVLIPIPQYPLYSAALAELNAVQVNYYLDEENCWALDINELRRSLTEARKHCDPKVLCIINPGNPTGQVQSRKCIEDVIRFAAEENLFLMADEVYQDNVYAKGCTFHSFKKVLFEMGPKYSETVELASFHSTSKGYMGECGFRGGYMEVINMDPAVKQQLTKLVSVRLCPPVPGQALLDVIVNPPKPGEPSYKQFMAEKQAVLGNLAEKARLTEEILNQSPGIRCNPVQGAMYSFPRIHIPEKAIKLAQAEGQAPDMFFCMKLLEETGICVVPGSGFGQREGTHHFRMTILPPTDKLKSLLERLKDFHQKFTEEYS.

Lys-342 carries the N6-(pyridoxal phosphate)lysine modification.

This sequence belongs to the class-I pyridoxal-phosphate-dependent aminotransferase family. Alanine aminotransferase subfamily. In terms of assembly, homodimer. It depends on pyridoxal 5'-phosphate as a cofactor.

The catalysed reaction is L-alanine + 2-oxoglutarate = pyruvate + L-glutamate. Its pathway is amino-acid degradation; L-alanine degradation via transaminase pathway; pyruvate from L-alanine: step 1/1. Its function is as follows. Catalyzes the reversible transamination between alanine and 2-oxoglutarate to form pyruvate and glutamate. In Xenopus tropicalis (Western clawed frog), this protein is Alanine aminotransferase 2 (gpt2).